Consider the following 1057-residue polypeptide: Carbamoyl phosphate synthase large chain (1057 aa).

Residues 1–401 (MPKRDDIKTI…SLLKAIRSLE (401 aa)) are carboxyphosphate synthetic domain. Residues R129, R169, G175, G176, K208, I210, E215, G241, I242, H243, Q284, and E298 each coordinate ATP. The ATP-grasp 1 domain occupies 133–327 (RTLMNDLNVP…IAKLAAKIAV (195 aa)). Mg(2+) contacts are provided by Q284, E298, and N300. Residues Q284, E298, and N300 each contribute to the Mn(2+) site. The tract at residues 402-546 (YGVHHLGLSN…YGTYEYENES (145 aa)) is oligomerization domain. The carbamoyl phosphate synthetic domain stretch occupies residues 547–929 (IVTDKEKILV…ALYKGLTGSG (383 aa)). Positions 671-861 (EALLREIAVP…MAQLAMRAIM (191 aa)) constitute an ATP-grasp 2 domain. Positions 707, 746, 748, 752, 777, 778, 779, 780, 820, and 832 each coordinate ATP. Mg(2+) contacts are provided by Q820, E832, and N834. Mn(2+) is bound by residues Q820, E832, and N834. Positions 930–1057 (FEVKDHGTVL…ESMTFTMRNV (128 aa)) constitute an MGS-like domain. Residues 930-1057 (FEVKDHGTVL…ESMTFTMRNV (128 aa)) form an allosteric domain region.

This sequence belongs to the CarB family. Composed of two chains; the small (or glutamine) chain promotes the hydrolysis of glutamine to ammonia, which is used by the large (or ammonia) chain to synthesize carbamoyl phosphate. Tetramer of heterodimers (alpha,beta)4. It depends on Mg(2+) as a cofactor. Requires Mn(2+) as cofactor.

The enzyme catalyses hydrogencarbonate + L-glutamine + 2 ATP + H2O = carbamoyl phosphate + L-glutamate + 2 ADP + phosphate + 2 H(+). It catalyses the reaction hydrogencarbonate + NH4(+) + 2 ATP = carbamoyl phosphate + 2 ADP + phosphate + 2 H(+). The protein operates within amino-acid biosynthesis; L-arginine biosynthesis; carbamoyl phosphate from bicarbonate: step 1/1. It participates in pyrimidine metabolism; UMP biosynthesis via de novo pathway; (S)-dihydroorotate from bicarbonate: step 1/3. Its function is as follows. Large subunit of the glutamine-dependent carbamoyl phosphate synthetase (CPSase). CPSase catalyzes the formation of carbamoyl phosphate from the ammonia moiety of glutamine, carbonate, and phosphate donated by ATP, constituting the first step of 2 biosynthetic pathways, one leading to arginine and/or urea and the other to pyrimidine nucleotides. The large subunit (synthetase) binds the substrates ammonia (free or transferred from glutamine from the small subunit), hydrogencarbonate and ATP and carries out an ATP-coupled ligase reaction, activating hydrogencarbonate by forming carboxy phosphate which reacts with ammonia to form carbamoyl phosphate. This chain is Carbamoyl phosphate synthase large chain, found in Staphylococcus epidermidis (strain ATCC 12228 / FDA PCI 1200).